The chain runs to 198 residues: 3-isopropylmalate dehydratase small subunit (198 aa).

This sequence belongs to the LeuD family. LeuD type 1 subfamily. As to quaternary structure, heterodimer of LeuC and LeuD.

The enzyme catalyses (2R,3S)-3-isopropylmalate = (2S)-2-isopropylmalate. Its pathway is amino-acid biosynthesis; L-leucine biosynthesis; L-leucine from 3-methyl-2-oxobutanoate: step 2/4. Its function is as follows. Catalyzes the isomerization between 2-isopropylmalate and 3-isopropylmalate, via the formation of 2-isopropylmaleate. This Mycolicibacterium paratuberculosis (strain ATCC BAA-968 / K-10) (Mycobacterium paratuberculosis) protein is 3-isopropylmalate dehydratase small subunit.